A 373-amino-acid chain; its full sequence is Mitochondrial fission regulator 2 (373 aa).

Serine 136 is subject to Phosphoserine. Residues 151-179 (VSEAAIKKIAALEDELTSLRAQIAAIVAM) are a coiled coil. Disordered stretches follow at residues 189-331 (GFIS…WDPV) and 346-373 (DDSFDSENRSWQGSPFSSPETSRNGSRF). The span at 224-239 (SPPPLPPPPPPLPPPQ) shows a compositional bias: pro residues. Composition is skewed to basic and acidic residues over residues 275-287 (KKTDGSHHSESQR) and 297-310 (VLKDMNKVKLRPVE). Residues serine 312 and serine 348 each carry the phosphoserine modification. A compositionally biased stretch (polar residues) spans 354–373 (RSWQGSPFSSPETSRNGSRF).

Belongs to the MTFR1 family.

It localises to the mitochondrion. May play a role in mitochondrial aerobic respiration essentially in the testis. Can also promote mitochondrial fission. The polypeptide is Mitochondrial fission regulator 2 (Mtfr2) (Rattus norvegicus (Rat)).